A 211-amino-acid chain; its full sequence is Imidazole glycerol phosphate synthase subunit HisH (211 aa).

Positions 1 to 206 (MIGIIDYGRG…GKWVNEDATV (206 aa)) constitute a Glutamine amidotransferase type-1 domain. Cys79 acts as the Nucleophile in catalysis. Residues His181 and Glu183 contribute to the active site.

In terms of assembly, heterodimer of HisH and HisF.

The protein localises to the cytoplasm. It carries out the reaction 5-[(5-phospho-1-deoxy-D-ribulos-1-ylimino)methylamino]-1-(5-phospho-beta-D-ribosyl)imidazole-4-carboxamide + L-glutamine = D-erythro-1-(imidazol-4-yl)glycerol 3-phosphate + 5-amino-1-(5-phospho-beta-D-ribosyl)imidazole-4-carboxamide + L-glutamate + H(+). The catalysed reaction is L-glutamine + H2O = L-glutamate + NH4(+). Its pathway is amino-acid biosynthesis; L-histidine biosynthesis; L-histidine from 5-phospho-alpha-D-ribose 1-diphosphate: step 5/9. Functionally, IGPS catalyzes the conversion of PRFAR and glutamine to IGP, AICAR and glutamate. The HisH subunit catalyzes the hydrolysis of glutamine to glutamate and ammonia as part of the synthesis of IGP and AICAR. The resulting ammonia molecule is channeled to the active site of HisF. This Desulfitobacterium hafniense (strain DSM 10664 / DCB-2) protein is Imidazole glycerol phosphate synthase subunit HisH.